The chain runs to 238 residues: Putative ABC transporter ATP-binding protein AF_1841 (238 aa).

An ABC transporter domain is found at 8 to 238 (IEADSVSYDY…EELLEKAGVI (231 aa)). 41 to 48 (GANGSGKS) is a binding site for ATP.

This sequence belongs to the ABC transporter superfamily.

Its subcellular location is the cell membrane. Its function is as follows. Probably part of an ABC transporter complex. Responsible for energy coupling to the transport system. The polypeptide is Putative ABC transporter ATP-binding protein AF_1841 (Archaeoglobus fulgidus (strain ATCC 49558 / DSM 4304 / JCM 9628 / NBRC 100126 / VC-16)).